A 216-amino-acid chain; its full sequence is LexA repressor (216 aa).

Residues 28 to 48 constitute a DNA-binding region (H-T-H motif); sequence RAEIAAEFGFSSPNAAEEHLR. Residues Ser134 and Lys171 each act as for autocatalytic cleavage activity in the active site.

The protein belongs to the peptidase S24 family. Homodimer.

It catalyses the reaction Hydrolysis of Ala-|-Gly bond in repressor LexA.. Functionally, represses a number of genes involved in the response to DNA damage (SOS response), including recA and lexA. In the presence of single-stranded DNA, RecA interacts with LexA causing an autocatalytic cleavage which disrupts the DNA-binding part of LexA, leading to derepression of the SOS regulon and eventually DNA repair. This Ralstonia pickettii (strain 12J) protein is LexA repressor.